Consider the following 161-residue polypeptide: Arachidonate 5-lipoxygenase-activating protein (161 aa).

At methionine 1–asparagine 8 the chain is on the lumenal side. A helical membrane pass occupies residues valine 9–valine 30. At glutamate 31–arginine 52 the chain is on the cytoplasmic side. Residues valine 53–leucine 77 form a helical membrane-spanning segment. At cysteine 78 to glutamine 80 the chain is on the lumenal side. A helical membrane pass occupies residues valine 81–leucine 102. The Cytoplasmic portion of the chain corresponds to glycine 103–glutamine 107. An intramembrane segment occupies serine 108 to glycine 115. Residues lysine 116–alanine 128 form a helical membrane-spanning segment. Over glycine 129–proline 161 the chain is Lumenal.

Belongs to the MAPEG family. In terms of assembly, homotrimer. Interacts with LTC4S and ALOX5.

It is found in the nucleus membrane. Its subcellular location is the endoplasmic reticulum membrane. Functionally, required for leukotriene biosynthesis by ALOX5 (5-lipoxygenase). Anchors ALOX5 to the membrane. Binds arachidonic acid, and could play an essential role in the transfer of arachidonic acid to ALOX5. Binds to MK-886, a compound that blocks the biosynthesis of leukotrienes. The chain is Arachidonate 5-lipoxygenase-activating protein (Alox5ap) from Rattus norvegicus (Rat).